Reading from the N-terminus, the 355-residue chain is UDP-N-acetylglucosamine--N-acetylmuramyl-(pentapeptide) pyrophosphoryl-undecaprenol N-acetylglucosamine transferase (355 aa).

Residues 11–13 (TGG), asparagine 120, arginine 161, serine 188, and glutamine 280 contribute to the UDP-N-acetyl-alpha-D-glucosamine site.

This sequence belongs to the glycosyltransferase 28 family. MurG subfamily.

Its subcellular location is the cell inner membrane. The enzyme catalyses di-trans,octa-cis-undecaprenyl diphospho-N-acetyl-alpha-D-muramoyl-L-alanyl-D-glutamyl-meso-2,6-diaminopimeloyl-D-alanyl-D-alanine + UDP-N-acetyl-alpha-D-glucosamine = di-trans,octa-cis-undecaprenyl diphospho-[N-acetyl-alpha-D-glucosaminyl-(1-&gt;4)]-N-acetyl-alpha-D-muramoyl-L-alanyl-D-glutamyl-meso-2,6-diaminopimeloyl-D-alanyl-D-alanine + UDP + H(+). Its pathway is cell wall biogenesis; peptidoglycan biosynthesis. In terms of biological role, cell wall formation. Catalyzes the transfer of a GlcNAc subunit on undecaprenyl-pyrophosphoryl-MurNAc-pentapeptide (lipid intermediate I) to form undecaprenyl-pyrophosphoryl-MurNAc-(pentapeptide)GlcNAc (lipid intermediate II). The polypeptide is UDP-N-acetylglucosamine--N-acetylmuramyl-(pentapeptide) pyrophosphoryl-undecaprenol N-acetylglucosamine transferase (Prochlorococcus marinus (strain MIT 9211)).